Consider the following 625-residue polypeptide: E3 ubiquitin-protein ligase synoviolin (625 aa).

At 1-4 (MVRA) the chain is on the cytoplasmic side. Residues 5–25 (ALVTATSLALTGAVVAHAYFL) traverse the membrane as a helical segment. Topologically, residues 26-40 (KHQFYPTVVYLTKSS) are lumenal. The helical transmembrane segment at 41–61 (PSMAVLYIQAFVLVFLLGKLM) threads the bilayer. The Cytoplasmic portion of the chain corresponds to 62-98 (RKVFFGQLRAAEMEHLIERSWYAVTETCLAFTVFRDD). A helical transmembrane segment spans residues 99 to 119 (FSPRFVALFTLLLFLKCFHWL). The Lumenal portion of the chain corresponds to 120–135 (AEDRVDFMERSPNISW). A helical transmembrane segment spans residues 136–156 (VFHFRVLSLMVLLGVMDFLFV). Residues 157–169 (NHACHSIITRGAS) lie on the Cytoplasmic side of the membrane. A helical membrane pass occupies residues 170–190 (VQLVFGFEYAILMTMVLTTFI). Topologically, residues 191-212 (KYTLHTIDLQSENPWDNKAVYM) are lumenal. Residues 213 to 235 (LYTELFTGFIKVLLYMAFMTIMI) traverse the membrane as a helical segment. Residues 236-270 (KVHTFPLFAIRPMYLAMRQFKKAVTDAIMSRRAIR) are interaction with p53/TP53. The Cytoplasmic portion of the chain corresponds to 236 to 625 (KVHTFPLFAI…GNLLKLASVN (390 aa)). Zn(2+) is bound by residues Cys-291, Cys-294, Cys-307, His-309, His-312, Cys-315, Cys-326, and Cys-329. The RING-type; atypical zinc finger occupies 291 to 330 (CIICREEMVTGAKKLPCNHIFHSSCLRSWFQRQQTCPTCR). Disordered stretches follow at residues 337–361 (SQPNQTPAPPAAQAPAPPAPANAPI), 390–434 (PPPA…SAAP), 462–487 (FMSSMPPPPSSLSSMSEAELRELEQE), and 523–625 (LSPP…ASVN). A compositionally biased stretch (pro residues) spans 342 to 361 (TPAPPAAQAPAPPAPANAPI). Low complexity predominate over residues 423–434 (AQSTAEAASAAP). Pro residues predominate over residues 462–471 (FMSSMPPPPS). Positions 523–564 (LSPPRSETNTGETSESANVESSPSTANTETAGQEIQSQSGES) are enriched in polar residues.

It belongs to the HRD1 family. Homodimer.

It localises to the endoplasmic reticulum membrane. The enzyme catalyses S-ubiquitinyl-[E2 ubiquitin-conjugating enzyme]-L-cysteine + [acceptor protein]-L-lysine = [E2 ubiquitin-conjugating enzyme]-L-cysteine + N(6)-ubiquitinyl-[acceptor protein]-L-lysine.. Its pathway is protein modification; protein ubiquitination. Functionally, E3 ubiquitin-protein ligase which accepts ubiquitin specifically from endoplasmic reticulum-associated UBC7 E2 ligase and transfers it to substrates, promoting their degradation. Component of the endoplasmic reticulum quality control (ERQC) system also called ER-associated degradation (ERAD) involved in ubiquitin-dependent degradation of misfolded endoplasmic reticulum proteins. Also promotes the degradation of normal but naturally short-lived proteins. Protects cells from ER stress-induced apoptosis. Sequesters p53 in the cytoplasm and promotes its degradation, thereby negatively regulating its biological function in transcription, cell cycle regulation and apoptosis. The sequence is that of E3 ubiquitin-protein ligase synoviolin (syvn1) from Danio rerio (Zebrafish).